Reading from the N-terminus, the 352-residue chain is Thymidine kinase (352 aa).

ATP is bound at residue 32-39 (GVYGIGKS). Catalysis depends on Glu60, which acts as the Proton acceptor. Substrate contacts are provided by Tyr78 and Gln102. Arg192 lines the ATP pocket. Substrate is bound at residue Arg198.

It belongs to the herpesviridae thymidine kinase family. In terms of assembly, homodimer.

The catalysed reaction is thymidine + ATP = dTMP + ADP + H(+). In terms of biological role, catalyzes the transfer of the gamma-phospho group of ATP to thymidine to generate dTMP in the salvage pathway of pyrimidine synthesis. The dTMP serves as a substrate for DNA polymerase during viral DNA replication. Allows the virus to be reactivated and to grow in non-proliferative cells lacking a high concentration of phosphorylated nucleic acid precursors. This is Thymidine kinase from Equus caballus (Horse).